The primary structure comprises 238 residues: Probable transcriptional regulatory protein SZO_02930 (238 aa).

It belongs to the TACO1 family. YeeN subfamily.

The protein resides in the cytoplasm. In Streptococcus equi subsp. zooepidemicus (strain H70), this protein is Probable transcriptional regulatory protein SZO_02930.